The following is a 182-amino-acid chain: Crossover junction endodeoxyribonuclease RuvC (182 aa).

Active-site residues include Asp-7, Glu-67, and Asp-139. Mg(2+) is bound by residues Asp-7, Glu-67, and Asp-139.

This sequence belongs to the RuvC family. In terms of assembly, homodimer which binds Holliday junction (HJ) DNA. The HJ becomes 2-fold symmetrical on binding to RuvC with unstacked arms; it has a different conformation from HJ DNA in complex with RuvA. In the full resolvosome a probable DNA-RuvA(4)-RuvB(12)-RuvC(2) complex forms which resolves the HJ. Mg(2+) serves as cofactor.

The protein resides in the cytoplasm. The enzyme catalyses Endonucleolytic cleavage at a junction such as a reciprocal single-stranded crossover between two homologous DNA duplexes (Holliday junction).. The RuvA-RuvB-RuvC complex processes Holliday junction (HJ) DNA during genetic recombination and DNA repair. Endonuclease that resolves HJ intermediates. Cleaves cruciform DNA by making single-stranded nicks across the HJ at symmetrical positions within the homologous arms, yielding a 5'-phosphate and a 3'-hydroxyl group; requires a central core of homology in the junction. The consensus cleavage sequence is 5'-(A/T)TT(C/G)-3'. Cleavage occurs on the 3'-side of the TT dinucleotide at the point of strand exchange. HJ branch migration catalyzed by RuvA-RuvB allows RuvC to scan DNA until it finds its consensus sequence, where it cleaves and resolves the cruciform DNA. The chain is Crossover junction endodeoxyribonuclease RuvC from Bordetella petrii (strain ATCC BAA-461 / DSM 12804 / CCUG 43448).